The primary structure comprises 421 residues: Elongation factor 1-alpha (421 aa).

Residues 4-220 enclose the tr-type G domain; the sequence is NRHQNLAVIG…NGLPVPQPPT (217 aa). The segment at 13–20 is G1; that stretch reads GHVDHGKS. 13–20 provides a ligand contact to GTP; that stretch reads GHVDHGKS. Residue serine 20 participates in Mg(2+) binding. A G2 region spans residues 69–73; that stretch reads GVTID. Residues 90 to 93 form a G3 region; the sequence is DCPG. Residues 90-94 and 145-148 each bind GTP; these read DCPGH and NKMD. The segment at 145–148 is G4; sequence NKMD. The segment at 184 to 186 is G5; it reads SAF.

The protein belongs to the TRAFAC class translation factor GTPase superfamily. Classic translation factor GTPase family. EF-Tu/EF-1A subfamily.

The protein localises to the cytoplasm. The enzyme catalyses GTP + H2O = GDP + phosphate + H(+). Its function is as follows. GTP hydrolase that promotes the GTP-dependent binding of aminoacyl-tRNA to the A-site of ribosomes during protein biosynthesis. This chain is Elongation factor 1-alpha, found in Halobacterium salinarum (strain ATCC 700922 / JCM 11081 / NRC-1) (Halobacterium halobium).